The primary structure comprises 118 residues: Non-specific lipid-transfer protein 3 (118 aa).

The first 25 residues, 1 to 25 (MARSMNLACVALVMCMVVIAPMAEA), serve as a signal peptide directing secretion. Intrachain disulfides connect cysteine 29-cysteine 76, cysteine 39-cysteine 53, cysteine 54-cysteine 99, and cysteine 74-cysteine 113.

This sequence belongs to the plant LTP family.

Plant non-specific lipid-transfer proteins transfer phospholipids as well as galactolipids across membranes. May play a role in wax or cutin deposition in the cell walls of expanding epidermal cells and certain secretory tissues. The polypeptide is Non-specific lipid-transfer protein 3 (Lens culinaris (Lentil)).